The sequence spans 347 residues: DNA-directed RNA polymerase subunit alpha (347 aa).

Positions 1 to 226 (MLISQRPTLS…ELFGLARELN (226 aa)) are alpha N-terminal domain (alpha-NTD). The interval 241–347 (ADHIASFALP…DQDYAETEQL (107 aa)) is alpha C-terminal domain (alpha-CTD).

It belongs to the RNA polymerase alpha chain family. Homodimer. The RNAP catalytic core consists of 2 alpha, 1 beta, 1 beta' and 1 omega subunit. When a sigma factor is associated with the core the holoenzyme is formed, which can initiate transcription.

It carries out the reaction RNA(n) + a ribonucleoside 5'-triphosphate = RNA(n+1) + diphosphate. In terms of biological role, DNA-dependent RNA polymerase catalyzes the transcription of DNA into RNA using the four ribonucleoside triphosphates as substrates. The polypeptide is DNA-directed RNA polymerase subunit alpha (Mycobacterium ulcerans (strain Agy99)).